Reading from the N-terminus, the 154-residue chain is Bacterial ferritin (154 aa).

In terms of domain architecture, Ferritin-like diiron spans 1–145 (MQGHPEVIDY…QQLGLIARMG (145 aa)). Positions 18, 46, 47, 50, 51, 54, 93, 129, and 130 each coordinate Fe(3+).

It belongs to the bacterioferritin family. The bacterioferritin (BFR) complex is formed of 24 subunits (FtnA and BfrB) arranged as 12 homodimers. The holocomplex contains about 8.7% Fe and 8.0% phosphate. In vivo purifies with BfrB in varying ratios, depending on the O(2) content; as O(2) decreases FtnA content rises. Pure FtnA BFR complexes are not isolated in situ, although in a bfrB deletion some iron will accumulate in FtnA ferritin complexes. Upon crystallization forms homooligomers of 24 subunits, the BFR complex, arranged as 12 dimers, that are packed together to form an approximately spherical molecule with a central cavity, in which large amounts of iron can be deposited. The BFR shell has three- and four-fold pores; Fe(2+) may move in and out of the shell via the four-fold pores. Does not interact with Bfd.

The protein resides in the cytoplasm. The enzyme catalyses 4 Fe(2+) + O2 + 4 H(+) = 4 Fe(3+) + 2 H2O. The catalysed reaction is Fe(2+)(in) = Fe(2+)(out). In terms of biological role, plays a role in catalase A (katA) expression; activity is required for optimal KatA activity and resistance to H(2)O(2). Iron-storage protein that is part of the heterooligomeric bacterioferritin (BFR) complex. The ferroxidase center binds Fe(2+), oxidizes it using dioxygen to Fe(3+), and participates in subsequent Fe(3+) oxide mineral core formation within the central cavity of the BFR protein shell. Can store up to 520 iron atoms per ferritin protein molecule. Iron release requires only the input of electrons from ferredoxin NADP reductase (FPR), does not require Bfd. Does not bind heme. This is Bacterial ferritin from Pseudomonas aeruginosa (strain ATCC 15692 / DSM 22644 / CIP 104116 / JCM 14847 / LMG 12228 / 1C / PRS 101 / PAO1).